A 1184-amino-acid polypeptide reads, in one-letter code: Cartilage intermediate layer protein 1 (1184 aa).

Positions 1-21 are cleaved as a signal peptide; sequence MVGTKAWVFSFLVLEVTSVLG. N-linked (GlcNAc...) asparagine glycosylation is found at N129 and N132. The TSP type-1 domain occupies 149 to 201; sequence ERIWSPWSPWSKCSAACGQTGVQTRTRICLAEMVSLCSEASEEGQHCMGQDCT. 4 disulfide bridges follow: C161–C195, C165–C200, C177–C185, and C330–C376. Residues 309 to 395 enclose the Ig-like C2-type domain; it reads PYMVMNPETK…KSKVAQLIVI (87 aa). N-linked (GlcNAc...) asparagine glycosylation is found at N346, N420, N550, N631, N1000, and N1056. Residues 1136–1170 form a disordered region; sequence TPAQSPAAGTVQGRVPSRRQQRASRGGQRQGGVVA. Low complexity predominate over residues 1158–1170; that stretch reads ASRGGQRQGGVVA.

In terms of assembly, monomer. Interacts with TGFB1. Cleaved into 2 chains possibly by a furin-like protease upon or preceding secretion. In terms of tissue distribution, specifically expressed in cartilage. Localizes in the intermediates layer of articular cartilage but neither in the superficial nor in the deepest regions. Specifically and highly expressed in intervertebral disk tissue. Expression increases with aging in hip articular cartilage. Overexpressed in articular hyaline cartilage from patients with calcium pyrophosphate dihydrate crystal deposition disease (CPPD). Expression in intervertebral disk tissue from individuals with lumbar disk disease increases as disk degeneration progresses.

It is found in the secreted. It localises to the extracellular space. Its subcellular location is the extracellular matrix. Functionally, probably plays a role in cartilage scaffolding. May act by antagonizing TGF-beta1 (TGFB1) and IGF1 functions. Has the ability to suppress IGF1-induced proliferation and sulfated proteoglycan synthesis, and inhibits ligand-induced IGF1R autophosphorylation. May inhibit TGFB1-mediated induction of cartilage matrix genes via its interaction with TGFB1. Overexpression may lead to impair chondrocyte growth and matrix repair and indirectly promote inorganic pyrophosphate (PPi) supersaturation in aging and osteoarthritis cartilage. In Homo sapiens (Human), this protein is Cartilage intermediate layer protein 1 (CILP).